The primary structure comprises 111 residues: U-scoloptoxin(16)-Sm2a (111 aa).

The N-terminal stretch at 1–28 (MCAKPNHLFVTVTFIFGFAVCIVQISAW) is a signal peptide.

Belongs to the scoloptoxin-16 family. In terms of processing, contains 4 disulfide bonds. Expressed by the venom gland.

The protein resides in the secreted. The sequence is that of U-scoloptoxin(16)-Sm2a from Scolopendra morsitans (Tanzanian blue ringleg centipede).